The sequence spans 500 residues: Farnesylcysteine lyase (500 aa).

Residues 1–24 (MKDFPIAISLLFALLSPVLLPCSG) form the signal peptide. Asparagine 56, asparagine 113, asparagine 211, and asparagine 281 each carry an N-linked (GlcNAc...) asparagine glycan.

The protein belongs to the prenylcysteine oxidase family. FAD is required as a cofactor. As to expression, expressed in seedilings, flowers, stems, leaves and roots.

It localises to the lysosome. The catalysed reaction is S-(2E,6E)-farnesyl-L-cysteine + O2 + H2O = (2E,6E)-farnesal + L-cysteine + H2O2. Involved in the degradation of prenylcysteine. Cleaves specifically the thioether bond of S-farnesyl-L-cysteine and has no activity with S-geranylgeranyl-L-cysteine. Also recognizes N-acetyl-farnesylcysteine and may have a role in deprenylation of farnesylated proteins. The protein is Farnesylcysteine lyase of Arabidopsis thaliana (Mouse-ear cress).